We begin with the raw amino-acid sequence, 303 residues long: RELT-like protein 2 (303 aa).

A helical membrane pass occupies residues 15-35; sequence LYMLFLLVLVFFLMGLVGFMI. 2 disordered regions span residues 46–67 and 111–303; these read CRTS…DDDM and SSLQ…AGGV. S52 is subject to Phosphoserine. Composition is skewed to basic and acidic residues over residues 148–158 and 172–188; these read RSKEGKSRPRP and THIE…DGSP. Gly residues predominate over residues 194–212; the sequence is GSGGGQDPGGGQGPGGGQP.

This sequence belongs to the RELT family. In terms of assembly, interacts with RELT, RELL1, OXSR1, PLSCR1 and TRAF2.

The protein localises to the cell membrane. Functionally, induces activation of MAPK14/p38 cascade, when overexpressed. Induces apoptosis, when overexpressed. The protein is RELT-like protein 2 (RELL2) of Bos taurus (Bovine).